The primary structure comprises 146 residues: Hemoglobin subunit beta (146 aa).

The 145-residue stretch at 2–146 folds into the Globin domain; that stretch reads FLTPEENGHV…VANALAHKYH (145 aa). T12 carries the phosphothreonine modification. Residue S44 is modified to Phosphoserine. The residue at position 59 (K59) is an N6-acetyllysine. Position 63 (H63) interacts with heme b. The residue at position 82 (K82) is an N6-acetyllysine. H92 contributes to the heme b binding site. C93 carries the S-nitrosocysteine modification. K144 is subject to N6-acetyllysine.

The protein belongs to the globin family. As to quaternary structure, heterotetramer of two alpha chains and two beta chains. Red blood cells.

In terms of biological role, involved in oxygen transport from the lung to the various peripheral tissues. The protein is Hemoglobin subunit beta (HBB) of Hapalemur griseus (Gray gentle lemur).